The primary structure comprises 211 residues: Beta-crystallin B3 (211 aa).

Met-1 is modified (N-acetylmethionine). Ala-2 is subject to N-acetylalanine; in Beta-crystallin B3, N-terminally processed. The N-terminal arm stretch occupies residues 2–23 (AEQHSTPEQAAAGKSHGGLGGS). 2 consecutive Beta/gamma crystallin 'Greek key' domains span residues 24 to 63 (YKVI…QVES) and 64 to 108 (GPWL…RPLH). Positions 109–113 (IDGPD) are connecting peptide. 2 consecutive Beta/gamma crystallin 'Greek key' domains span residues 114-155 (HKLH…RAIN) and 156-198 (GTWV…RRIR). Residues 200 to 211 (QKWHKRGVFLSS) form a C-terminal arm region.

The protein belongs to the beta/gamma-crystallin family. Homo/heterodimer, or complexes of higher-order. The structure of beta-crystallin oligomers seems to be stabilized through interactions between the N-terminal arms.

Its function is as follows. Crystallins are the dominant structural components of the vertebrate eye lens. This chain is Beta-crystallin B3 (CRYBB3), found in Bos taurus (Bovine).